Consider the following 258-residue polypeptide: Gamma carbonic anhydrase 3, mitochondrial (258 aa).

A mitochondrion-targeting transit peptide spans M1–R43. Substrate is bound by residues R86–D88 and Q101–D102. Zn(2+) is bound by residues H107, H130, and H135. N209 serves as a coordination point for substrate.

This sequence belongs to the gamma-class carbonic anhydrase family. In terms of assembly, homotrimer. Component of the oxidoreductase respiratory chain complex I; element of the extra matrix-exposed domain, which is attached to the membrane arm of this complex. The cofactor is Zn(2+).

It localises to the mitochondrion membrane. Functionally, enzyme involved in the catabolism of H(2)CO(3) but that does not mediates the reversible hydration of carbon dioxide. Mediates complex I assembly in mitochondria and respiration. The protein is Gamma carbonic anhydrase 3, mitochondrial (GAMMACA3) of Arabidopsis thaliana (Mouse-ear cress).